The following is a 574-amino-acid chain: Cyclomaltodextrinase (574 aa).

Asn144, Asp146, Asn149, Asp150, Gly168, and Asp170 together coordinate Ca(2+). Positions 243 and 323 each coordinate substrate. Asp325 (nucleophile) is an active-site residue. Glu354 (proton donor) is an active-site residue. Substrate-binding positions include 420 to 421 (HD), Asp465, and Arg469.

The protein belongs to the glycosyl hydrolase 13 family. Monomer. Ca(2+) serves as cofactor.

The enzyme catalyses cyclomaltodextrin + H2O = linear maltodextrin. Hydrolyzes cyclodextrins. Can also act on linear maltodextrins, with the exception of maltose. The polypeptide is Cyclomaltodextrinase (Thermoanaerobacter pseudethanolicus (strain ATCC 33223 / 39E) (Clostridium thermohydrosulfuricum)).